The sequence spans 771 residues: Solute carrier family 7 member 14 (771 aa).

6 helical membrane passes run 58–78 (LISL…SGLV), 83–103 (AGPG…LSGV), 130–150 (FVAF…TAAG), 187–207 (YPDL…ALGV), 216–236 (VLNV…FFFI), and 251–271 (WSGV…FDII). Asparagine 282 carries N-linked (GlcNAc...) asparagine glycosylation. The next 5 helical transmembrane spans lie at 291-311 (ASLV…TLMV), 336-356 (FVVA…SLFP), 360-380 (VIYA…VSSY), 384-404 (PVVA…LVSL), and 407-427 (LIEM…VCVL). Phosphoserine is present on residues serine 465, serine 468, and serine 488. The next 4 helical transmembrane spans lie at 565-585 (VTIC…FIIF), 596-616 (WAIL…FVIL), 628-648 (MAPC…YLML), and 655-675 (WIRF…YGIW). Asparagine 676 is a glycosylation site (N-linked (GlcNAc...) asparagine). Residues 712–771 (TEGESQENWGGPAEDKGFYYQQMSDTQPNTRTSSKAKSKSKHKQNSEALIANDELDYSPE) are disordered. Positions 732 to 743 (QQMSDTQPNTRT) are enriched in polar residues. The segment covering 745-754 (SKAKSKSKHK) has biased composition (basic residues). Phosphoserine is present on residues serine 757 and serine 769.

It belongs to the amino acid-polyamine-organocation (APC) superfamily. Cationic amino acid transporter (CAT) (TC 2.A.3.3) family.

Its subcellular location is the lysosome membrane. The enzyme catalyses 4-aminobutanoate(in) = 4-aminobutanoate(out). In terms of biological role, imports 4-aminobutanoate (GABA) into lysosomes. May act as a GABA sensor that regulates mTORC2-dependent INS signaling and gluconeogenesis. The transport mechanism and substrate selectivity remain to be elucidated. The protein is Solute carrier family 7 member 14 of Bos taurus (Bovine).